The primary structure comprises 350 residues: Ion-translocating oxidoreductase complex subunit D (350 aa).

A run of 3 helical transmembrane segments spans residues 25–45 (ALCL…GSLI), 89–109 (IPPL…IIIV), and 124–144 (AMAG…SWVA). FMN phosphoryl threonine is present on Thr185. Helical transmembrane passes span 212–232 (SYGV…LVLL), 239–259 (WHIS…GFLI), 265–285 (VSPL…FIAT), 298–318 (LIFG…GGYP), and 319–339 (DAVA…DHYV).

The protein belongs to the NqrB/RnfD family. The complex is composed of six subunits: RnfA, RnfB, RnfC, RnfD, RnfE and RnfG. FMN is required as a cofactor.

It is found in the cell inner membrane. Part of a membrane-bound complex that couples electron transfer with translocation of ions across the membrane. The sequence is that of Ion-translocating oxidoreductase complex subunit D from Shewanella denitrificans (strain OS217 / ATCC BAA-1090 / DSM 15013).